The primary structure comprises 489 residues: Probable 26S proteasome non-ATPase regulatory subunit 3 (489 aa).

Positions 1–23 (MTQDVEMKEVPAPAPSNSVTAAT) are disordered. The PCI domain occupies 241–422 (CRYLFYLGKI…GWMVSKETGD (182 aa)). Residues 454-489 (PANSHKDKESAEKRRERQQQEQELAKHIAEEDDDEF) form a disordered region. Residues 457–482 (SHKDKESAEKRRERQQQEQELAKHIA) are compositionally biased toward basic and acidic residues.

It belongs to the proteasome subunit S3 family. In terms of assembly, the 26S proteasome is composed of a core protease, known as the 20S proteasome, capped at one or both ends by the 19S regulatory complex (RC). The RC is composed of at least 18 different subunits in two subcomplexes, the base and the lid, which form the portions proximal and distal to the 20S proteolytic core, respectively.

It is found in the nucleus. Functionally, acts as a regulatory subunit of the 26 proteasome which is involved in the ATP-dependent degradation of ubiquitinated proteins. This is Probable 26S proteasome non-ATPase regulatory subunit 3 (21D7) from Daucus carota (Wild carrot).